We begin with the raw amino-acid sequence, 221 residues long: Epididymal secretory glutathione peroxidase (221 aa).

An N-terminal signal peptide occupies residues 1-21; that stretch reads MAIQLRVFYLVPLLLASYVQT. Cys-73 is a catalytic residue.

Belongs to the glutathione peroxidase family. As to expression, epididymis.

Its subcellular location is the secreted. The enzyme catalyses 2 glutathione + H2O2 = glutathione disulfide + 2 H2O. Protects cells and enzymes from oxidative damage, by catalyzing the reduction of hydrogen peroxide, lipid peroxides and organic hydroperoxide, by glutathione. May constitute a glutathione peroxidase-like protective system against peroxide damage in sperm membrane lipids. In Rattus norvegicus (Rat), this protein is Epididymal secretory glutathione peroxidase (Gpx5).